The following is a 344-amino-acid chain: MLTDRQLLILQVIIDDFIRSGQPVGSRTLSKKHQIAFSSATIRNEMADLEELGYIEKTHISSGRVPSEKGYRYYVDHLLPPQRLTRADIQKIRSVFAERIYELEKLMQKSAQILSELTNYTSIALGPTFKESKLKQMQIVPLNEQTAVAIVVTDTGHVENRVVTIPSSMDAGDLEKMVNIFNERLNGVPLIDLKEKMETEVADVLRRHIRNYDSVLNTLIETLDAPEEEKVFFAGKANMLNQPEFSDIQKVRPLLDIIEQEKDIYRLLRKQTQKGVRVSIGHENELRGMENCSLITATYSVGDEPLGAIAILGPTRMEYSRVITVLNRVASDLSAALAKWYQSQ.

The protein belongs to the HrcA family.

In terms of biological role, negative regulator of class I heat shock genes (grpE-dnaK-dnaJ and groELS operons). Prevents heat-shock induction of these operons. The sequence is that of Heat-inducible transcription repressor HrcA from Geobacillus kaustophilus (strain HTA426).